The chain runs to 423 residues: uncharacterized protein (423 aa).

Substrate is bound by residues Ser-51, Asp-138, and Asn-150. Residues 170-171 (TD) and 214-220 (TGGMRTK) contribute to the ATP site. A PUA domain is found at 315–406 (KGAIIIDENS…EKIHDVLGYS (92 aa)).

It belongs to the glutamate 5-kinase family.

The protein resides in the cytoplasm. This is an uncharacterized protein from Saccharomyces cerevisiae (strain ATCC 204508 / S288c) (Baker's yeast).